The primary structure comprises 85 residues: CRISPR-associated endoribonuclease Cas2 (85 aa).

Aspartate 8 lines the Mg(2+) pocket.

Belongs to the CRISPR-associated endoribonuclease Cas2 protein family. As to quaternary structure, homodimer, forms a heterotetramer with a Cas1 homodimer. The cofactor is Mg(2+).

CRISPR (clustered regularly interspaced short palindromic repeat), is an adaptive immune system that provides protection against mobile genetic elements (viruses, transposable elements and conjugative plasmids). CRISPR clusters contain sequences complementary to antecedent mobile elements and target invading nucleic acids. CRISPR clusters are transcribed and processed into CRISPR RNA (crRNA). Functions as a ssRNA-specific endoribonuclease. Involved in the integration of spacer DNA into the CRISPR cassette. The protein is CRISPR-associated endoribonuclease Cas2 of Pyrococcus furiosus (strain ATCC 43587 / DSM 3638 / JCM 8422 / Vc1).